A 118-amino-acid chain; its full sequence is Acidic phospholipase A2 CM-I (118 aa).

7 disulfide bridges follow: cysteine 11–cysteine 70, cysteine 26–cysteine 117, cysteine 28–cysteine 44, cysteine 43–cysteine 98, cysteine 50–cysteine 91, cysteine 59–cysteine 84, and cysteine 77–cysteine 89. 3 residues coordinate Ca(2+): tyrosine 27, glycine 29, and glycine 31. Residue histidine 47 is part of the active site. Aspartate 48 contributes to the Ca(2+) binding site. Residue aspartate 92 is part of the active site.

This sequence belongs to the phospholipase A2 family. Group I subfamily. D49 sub-subfamily. The cofactor is Ca(2+). Expressed by the venom gland.

It is found in the secreted. The catalysed reaction is a 1,2-diacyl-sn-glycero-3-phosphocholine + H2O = a 1-acyl-sn-glycero-3-phosphocholine + a fatty acid + H(+). Functionally, snake venom phospholipase A2 (PLA2) that causes myonecrosis when injected intramuscularly, shows indirect hemolytic activity, abolishes twitches evoked by indirect stimulation earlier than those by direct stimulation (in the mouse phrenic nerve-diaphragm preparation) but does not produce complete neuromuscular block (up to 30 ug/ml) (in the chick biventer cervicis nerve-muscle preparation). PLA2 catalyzes the calcium-dependent hydrolysis of the 2-acyl groups in 3-sn-phosphoglycerides. The chain is Acidic phospholipase A2 CM-I from Naja mossambica (Mozambique spitting cobra).